Consider the following 601-residue polypeptide: A-type ATP synthase subunit A (601 aa).

235–242 contributes to the ATP binding site; that stretch reads GGFGTGKT.

This sequence belongs to the ATPase alpha/beta chains family. As to quaternary structure, has multiple subunits with at least A(3), B(3), C, D, E, F, H, I and proteolipid K(x).

The protein localises to the cell membrane. It catalyses the reaction ATP + H2O + 4 H(+)(in) = ADP + phosphate + 5 H(+)(out). Functionally, component of the A-type ATP synthase that produces ATP from ADP in the presence of a proton gradient across the membrane. The A chain is the catalytic subunit. This chain is A-type ATP synthase subunit A, found in Thermofilum pendens (strain DSM 2475 / Hrk 5).